Consider the following 620-residue polypeptide: Chaperone protein DnaK (620 aa).

Residues 579–620 (KAQKEASAGAEASEDASGPSSTGSASDDDVVDADYEVVDEDK) form a disordered region. Over residues 583-603 (EASAGAEASEDASGPSSTGSA) the composition is skewed to low complexity. Residues 604-620 (SDDDVVDADYEVVDEDK) show a composition bias toward acidic residues.

Belongs to the heat shock protein 70 family.

Acts as a chaperone. The chain is Chaperone protein DnaK from Methanococcoides burtonii (strain DSM 6242 / NBRC 107633 / OCM 468 / ACE-M).